We begin with the raw amino-acid sequence, 396 residues long: Cell adhesion molecule 3 (396 aa).

An N-terminal signal peptide occupies residues 1 to 22; that stretch reads MGAPSALPLLLLLACSWAPGGA. One can recognise an Ig-like V-type domain in the interval 23 to 124; sequence NLSQDDSQPW…VRTAKSLVTV (102 aa). The Extracellular portion of the chain corresponds to 23-328; sequence NLSQDDSQPW…PVPSSSSTYH (306 aa). 3 disulfide bridges follow: C48-C108, C150-C207, and C252-C297. Ig-like C2-type domains are found at residues 128–226 and 231–313; these read PQKP…QRIE and PTAM…FTLN. N288 carries N-linked (GlcNAc...) asparagine glycosylation. A helical membrane pass occupies residues 329–349; it reads AIIGGIVAFIVFLLLILLIFL. Over 350-396 the chain is Cytoplasmic; it reads GHYLIRHKGTYLTHEAKGSDDAPDADTAIINAEGGQSGGDDKKEYFI. The interval 365 to 396 is disordered; that stretch reads AKGSDDAPDADTAIINAEGGQSGGDDKKEYFI. Residue S386 is modified to Phosphoserine.

Belongs to the nectin family. In terms of assembly, homodimer. Can form trans-heterodimers with NECTIN3. Interacts with EPB41L1, DLG3, PALS2 and CASK. In terms of tissue distribution, mainly expressed in brain, in neuronal cell bodies of cerebellum, cortex, hippocampus, hypothalamus and spinal cord. In spinal cord predominantly expressed in motor neurons. Expressed in axons, presynaptic nerve terminals, glia cell processes.

Its subcellular location is the cell membrane. It localises to the cell junction. In terms of biological role, involved in cell-cell adhesion. Has both calcium-independent homophilic cell-cell adhesion activity and calcium-independent heterophilic cell-cell adhesion activity with IGSF4, NECTIN1 and NECTIN3. Interaction with EPB41L1 may regulate structure or function of cell-cell junctions. This chain is Cell adhesion molecule 3 (Cadm3), found in Mus musculus (Mouse).